The primary structure comprises 145 residues: MKALLQRVGAARVEVGGEIVGSIDRGLLVLVGVEPEDGERCAAKMLHKLLNYRVFGDDEGKMNRSLLDVQGGLLLVSQFTLAANTRSGLRPSFSSAAPPAQGEAVFEHLVKLAREAYPQVATGRFGADMQVHLVNDGPVTFLLES.

The short motif at 137–138 (GP) is the Gly-cisPro motif, important for rejection of L-amino acids element.

The protein belongs to the DTD family. As to quaternary structure, homodimer.

Its subcellular location is the cytoplasm. It carries out the reaction glycyl-tRNA(Ala) + H2O = tRNA(Ala) + glycine + H(+). It catalyses the reaction a D-aminoacyl-tRNA + H2O = a tRNA + a D-alpha-amino acid + H(+). An aminoacyl-tRNA editing enzyme that deacylates mischarged D-aminoacyl-tRNAs. Also deacylates mischarged glycyl-tRNA(Ala), protecting cells against glycine mischarging by AlaRS. Acts via tRNA-based rather than protein-based catalysis; rejects L-amino acids rather than detecting D-amino acids in the active site. By recycling D-aminoacyl-tRNA to D-amino acids and free tRNA molecules, this enzyme counteracts the toxicity associated with the formation of D-aminoacyl-tRNA entities in vivo and helps enforce protein L-homochirality. The polypeptide is D-aminoacyl-tRNA deacylase (Pseudomonas aeruginosa (strain LESB58)).